The chain runs to 180 residues: uncharacterized protein (180 aa).

An N-terminal signal peptide occupies residues 1 to 24; that stretch reads MKKKTIFQCVILFFSILNIHVGMA.

Functionally, part of the elfADCG-ycbUVF fimbrial operon, which promotes adhesion of bacteria to different abiotic surfaces. This is an uncharacterized protein from Escherichia coli (strain K12).